Consider the following 168-residue polypeptide: Protein YciE (168 aa).

In Escherichia coli (strain K12), this protein is Protein YciE (yciE).